Consider the following 316-residue polypeptide: N-acetyl-gamma-glutamyl-phosphate reductase (316 aa).

Cys-136 is an active-site residue.

This sequence belongs to the NAGSA dehydrogenase family. Type 1 subfamily.

Its subcellular location is the cytoplasm. The enzyme catalyses N-acetyl-L-glutamate 5-semialdehyde + phosphate + NADP(+) = N-acetyl-L-glutamyl 5-phosphate + NADPH + H(+). Its pathway is amino-acid biosynthesis; L-arginine biosynthesis; N(2)-acetyl-L-ornithine from L-glutamate: step 3/4. Catalyzes the NADPH-dependent reduction of N-acetyl-5-glutamyl phosphate to yield N-acetyl-L-glutamate 5-semialdehyde. This Xanthomonas euvesicatoria pv. vesicatoria (strain 85-10) (Xanthomonas campestris pv. vesicatoria) protein is N-acetyl-gamma-glutamyl-phosphate reductase.